A 180-amino-acid chain; its full sequence is MSIEVSNESGMDISEPELISVARFVIARMDVHPAAELSMVLVDSATMADLHVRWMDLPGPTDVMSFPMDELEPGGRPDSPEPGPSMLGDIVLCPSFAADQADKAGHSLAHELALLTVHGVLHLLGYDHAEPEEEKEMFGLQNSLLEEWYEDLRRIDREAALAERDQKLLGKTGFVDGVDR.

Zn(2+)-binding residues include His118, His122, and His128.

It belongs to the endoribonuclease YbeY family. It depends on Zn(2+) as a cofactor.

The protein localises to the cytoplasm. Its function is as follows. Single strand-specific metallo-endoribonuclease involved in late-stage 70S ribosome quality control and in maturation of the 3' terminus of the 16S rRNA. In Rhodococcus erythropolis (strain PR4 / NBRC 100887), this protein is Endoribonuclease YbeY.